We begin with the raw amino-acid sequence, 309 residues long: tRNA dimethylallyltransferase (309 aa).

Residue 9–16 participates in ATP binding; that stretch reads GPTAVGKT. 11–16 serves as a coordination point for substrate; the sequence is TAVGKT. Positions 34-37 are interaction with substrate tRNA; it reads DSMQ.

This sequence belongs to the IPP transferase family. As to quaternary structure, monomer. Mg(2+) is required as a cofactor.

The enzyme catalyses adenosine(37) in tRNA + dimethylallyl diphosphate = N(6)-dimethylallyladenosine(37) in tRNA + diphosphate. Catalyzes the transfer of a dimethylallyl group onto the adenine at position 37 in tRNAs that read codons beginning with uridine, leading to the formation of N6-(dimethylallyl)adenosine (i(6)A). The protein is tRNA dimethylallyltransferase of Clostridium acetobutylicum (strain ATCC 824 / DSM 792 / JCM 1419 / IAM 19013 / LMG 5710 / NBRC 13948 / NRRL B-527 / VKM B-1787 / 2291 / W).